The following is a 638-amino-acid chain: ATP-dependent rRNA helicase spb4 (638 aa).

The Q motif signature appears at 14–42 (WDAVNPPLSEWVLDAVSSMGFTRMTPVQA). In terms of domain architecture, Helicase ATP-binding spans 45-249 (IPLFMAHKDV…RVGLRNPVKV (205 aa)). 58 to 65 (AVTGSGKT) is a binding site for ATP. The short motif at 197-200 (DEAD) is the DEAD box element. The 155-residue stretch at 283–437 (ALKHILNSVQ…PITVSDAEAA (155 aa)) folds into the Helicase C-terminal domain. Positions 521–629 (AYKDKQREKR…AKADKDAEEG (109 aa)) form a coiled coil. Residues 538 to 638 (MAESGQQQTT…GGDEEFTGFD (101 aa)) are disordered. Residues 574-597 (MKQVRQERKRWEKMTEEEKKKALE) show a composition bias toward basic and acidic residues. Residues 625-638 (DAEEGGDEEFTGFD) show a composition bias toward acidic residues.

The protein belongs to the DEAD box helicase family. DDX55/SPB4 subfamily. Component of pre-60S ribosomal complexes.

It localises to the nucleus. It is found in the nucleolus. The enzyme catalyses ATP + H2O = ADP + phosphate + H(+). Functionally, ATP-binding RNA helicase involved in the biogenesis of 60S ribosomal subunits. Binds 90S pre-ribosomal particles and dissociates from pre-60S ribosomal particles after processing of 27SB pre-rRNA. Required for the normal formation of 18S rRNA through the processing of pre-rRNAs at sites A0, A1 and A2, and the normal formation of 25S and 5.8S rRNAs through the processing of pre-rRNAs at sites C1 and C2. This chain is ATP-dependent rRNA helicase spb4, found in Emericella nidulans (strain FGSC A4 / ATCC 38163 / CBS 112.46 / NRRL 194 / M139) (Aspergillus nidulans).